A 207-amino-acid polypeptide reads, in one-letter code: tRNA (pseudouridine(54)-N(1))-methyltransferase (207 aa).

Leu137 is a binding site for S-adenosyl-L-methionine.

The protein belongs to the methyltransferase superfamily. TrmY family. As to quaternary structure, homodimer.

The protein resides in the cytoplasm. It catalyses the reaction pseudouridine(54) in tRNA + S-adenosyl-L-methionine = N(1)-methylpseudouridine(54) in tRNA + S-adenosyl-L-homocysteine + H(+). In terms of biological role, specifically catalyzes the N1-methylation of pseudouridine at position 54 (Psi54) in tRNAs. The polypeptide is tRNA (pseudouridine(54)-N(1))-methyltransferase (Halorubrum lacusprofundi (strain ATCC 49239 / DSM 5036 / JCM 8891 / ACAM 34)).